The following is a 794-amino-acid chain: LPS-assembly protein LptD (794 aa).

Positions 1 to 31 are cleaved as a signal peptide; sequence MPSHCSSLLCARFRLSSLAVIVALAASGVRA.

This sequence belongs to the LptD family. As to quaternary structure, component of the lipopolysaccharide transport and assembly complex. Interacts with LptE and LptA.

It is found in the cell outer membrane. Functionally, together with LptE, is involved in the assembly of lipopolysaccharide (LPS) at the surface of the outer membrane. In Marinobacter nauticus (strain ATCC 700491 / DSM 11845 / VT8) (Marinobacter aquaeolei), this protein is LPS-assembly protein LptD.